The following is a 340-amino-acid chain: Olfactory receptor 5T3 (340 aa).

Over 1–55 the chain is Extracellular; sequence MDSTFTGYNLYNLQVKTEMDKLSSGLDIYRNPLKNKTEVTMFILTGFTDDFELQV. N35 is a glycosylation site (N-linked (GlcNAc...) asparagine). The helical transmembrane segment at 56 to 76 threads the bilayer; sequence FLFLLFFAIYLFTLIGNLGLV. The Cytoplasmic segment spans residues 77-84; it reads VLVIEDSW. The chain crosses the membrane as a helical span at residues 85–105; sequence LHNPMYYFLSVLSFLDACYST. Topologically, residues 106-129 are extracellular; the sequence is VVTPKMLVNFLAKNKSISFIGCAT. An N-linked (GlcNAc...) asparagine glycan is attached at N119. Cysteines 127 and 219 form a disulfide. Residues 130 to 150 form a helical membrane-spanning segment; that stretch reads QMLLFVTFGTTECFLLAAMAY. At 151 to 169 the chain is on the cytoplasmic side; the sequence is DHYVAIYNPLLYSVSMSPR. A helical membrane pass occupies residues 170-190; sequence VYVPLITASYVAGILHATIHI. The Extracellular segment spans residues 191-226; the sequence is VATFSLSFCGSNEIRHVFCDMPPLLAISCSDTHTNQ. The chain crosses the membrane as a helical span at residues 227 to 247; the sequence is LLLFYFVGSIEIVTILIVLIS. Topologically, residues 248-267 are cytoplasmic; sequence CDFILLSILKMHSAKGRQKA. Residues 268–288 traverse the membrane as a helical segment; the sequence is FSTCGSHLTGVTIYHGTILVS. The Extracellular segment spans residues 289-301; the sequence is YMRPSSSYASDHD. Residues 302 to 322 form a helical membrane-spanning segment; sequence IIVSIFYTIVIPKLNPIIYSL. At 323-340 the chain is on the cytoplasmic side; that stretch reads RNKEVKKAVKKMLKLVYK.

This sequence belongs to the G-protein coupled receptor 1 family.

The protein resides in the cell membrane. Its function is as follows. Odorant receptor. This chain is Olfactory receptor 5T3 (OR5T3), found in Homo sapiens (Human).